The primary structure comprises 452 residues: Pup--protein ligase (452 aa).

Glu9 provides a ligand contact to Mg(2+). Arg53 contacts ATP. Tyr55 provides a ligand contact to Mg(2+). Asp57 acts as the Proton acceptor in catalysis. Mg(2+) is bound at residue Glu63. ATP-binding residues include Thr66 and Trp419.

The protein belongs to the Pup ligase/Pup deamidase family. Pup-conjugating enzyme subfamily.

It catalyses the reaction ATP + [prokaryotic ubiquitin-like protein]-L-glutamate + [protein]-L-lysine = ADP + phosphate + N(6)-([prokaryotic ubiquitin-like protein]-gamma-L-glutamyl)-[protein]-L-lysine.. Its pathway is protein degradation; proteasomal Pup-dependent pathway. The protein operates within protein modification; protein pupylation. Functionally, catalyzes the covalent attachment of the prokaryotic ubiquitin-like protein modifier Pup to the proteasomal substrate proteins, thereby targeting them for proteasomal degradation. This tagging system is termed pupylation. The ligation reaction involves the side-chain carboxylate of the C-terminal glutamate of Pup and the side-chain amino group of a substrate lysine. The sequence is that of Pup--protein ligase from Mycolicibacterium gilvum (strain PYR-GCK) (Mycobacterium gilvum (strain PYR-GCK)).